We begin with the raw amino-acid sequence, 199 residues long: Ribosome biogenesis protein RLP24 (199 aa).

The tract at residues 147-182 (KEQERAESVSEQEESEEEEEDMEIDSDEEEEEQLEK) is disordered. Over residues 156–179 (SEQEESEEEEEDMEIDSDEEEEEQ) the composition is skewed to acidic residues. A Phosphoserine modification is found at Ser172.

Belongs to the eukaryotic ribosomal protein eL24 family. Associated with nucleolar and cytoplasmic pre-60S particles. At the end of biogenesis it dissociates from cytoplasmic pre-60S particles and is likely to be exchanged for its ribosomal homolog, RPL24. Interacts (via C-terminus) with AFG2 (hexameric form); the interaction is direct, recruits AFG2 to pre-60S ribosomal particles and promotes AFG2 ATPase activity and RLP24 release from pre-60S ribosomal particles. Interacts with NOG1; the interaction is direct.

The protein localises to the cytoplasm. The protein resides in the nucleus. Involved in the biogenesis of the 60S ribosomal subunit. Ensures the docking of NOG1 to pre-60S ribosomal particles. Activates and recruits ATPase AFG2 to cytoplasmic pre-60S ribosomal particles. The chain is Ribosome biogenesis protein RLP24 (RLP24) from Saccharomyces cerevisiae (strain ATCC 204508 / S288c) (Baker's yeast).